Reading from the N-terminus, the 490-residue chain is MSRYGLQQLYINGAYVDSTGNDTFDAVNPANGDIIACIQSATAADVDRAVSAATAGQKVWAAMTAMERSRILRRAVDILRERNDELALLETHDTGKPLSETRTVDIVTGADVLEYYAGLIPMLEGQQIPLRDTSFVYTRREPLGVVAGIGAWNYPIQIALWKSAPALAAGNAMIFKPSEVTSLTALKLAEIYTEAGLPAGVFNVLTGTGKSVGQALTTHPGIAKVSFTGGIASGKTVMANAAGSTLKDVTMELGGKSPLIIFDDADLDKAADIAMMANFFSSGQVCTNGTRVFVPKALQAQFEEKILACVQRIRAGDPTDESVNFGPLVSFPHRESVLRYIESGKREGARVLVGGEPMTDGDYAQGAYVAPTVFTDCRDDMKIVRKEIFGPVMSILTYQDEDEVIRRANDSEYGLAAGIVTRDLNRAHRVIHQLEAGICWINTWGESPAEMPVGGYKHSGVGRENGVTTLEHYTQIKSIQVELGEFRSVF.

D93 contacts K(+). 150–152 is a binding site for NAD(+); that stretch reads GAW. The Charge relay system role is filled by K162. An NAD(+)-binding site is contributed by 176 to 179; that stretch reads KPSE. Residue V180 coordinates K(+). 230–233 is a binding site for NAD(+); it reads GIAS. Residue L246 coordinates K(+). E252 acts as the Proton acceptor in catalysis. Positions 254, 286, and 387 each coordinate NAD(+). The active-site Nucleophile is C286. At C286 the chain carries Cysteine sulfenic acid (-SOH). K(+) is bound by residues K457 and G460. E464 acts as the Charge relay system in catalysis.

The protein belongs to the aldehyde dehydrogenase family. Dimer of dimers. The cofactor is K(+).

It catalyses the reaction betaine aldehyde + NAD(+) + H2O = glycine betaine + NADH + 2 H(+). It functions in the pathway amine and polyamine biosynthesis; betaine biosynthesis via choline pathway; betaine from betaine aldehyde: step 1/1. Functionally, involved in the biosynthesis of the osmoprotectant glycine betaine. Catalyzes the irreversible oxidation of betaine aldehyde to the corresponding acid. In Pectobacterium atrosepticum (strain SCRI 1043 / ATCC BAA-672) (Erwinia carotovora subsp. atroseptica), this protein is Betaine aldehyde dehydrogenase.